Here is a 1689-residue protein sequence, read N- to C-terminus: DNA-directed RNA polymerase I subunit rpa1 (1689 aa).

Zn(2+) is bound by residues Cys63, Cys66, Cys73, and His76. 2 positions are modified to phosphoserine: Ser159 and Ser161. Over residues Val269–Asp280 the composition is skewed to basic and acidic residues. Positions Val269–Val295 are disordered. A compositionally biased stretch (acidic residues) spans Glu281–Val295. Residues Asp643, Asp645, and Asp647 each coordinate Mg(2+). Residues Pro1005–Glu1017 form a bridging helix region. The interval Arg1346–Glu1440 is disordered. A phosphoserine mark is found at Ser1438 and Ser1441.

This sequence belongs to the RNA polymerase beta' chain family. In terms of assembly, component of the RNA polymerase I (Pol I) complex consisting of at least 13 subunits.

It is found in the nucleus. It localises to the nucleolus. It catalyses the reaction RNA(n) + a ribonucleoside 5'-triphosphate = RNA(n+1) + diphosphate. DNA-dependent RNA polymerase catalyzes the transcription of DNA into RNA using the four ribonucleoside triphosphates as substrates. Largest and catalytic core component of RNA polymerase I which synthesizes ribosomal RNA precursors. Forms the polymerase active center together with the second largest subunit. A single stranded DNA template strand of the promoter is positioned within the central active site cleft of Pol I. A bridging helix emanates from RPA1 and crosses the cleft near the catalytic site and is thought to promote translocation of Pol I by acting as a ratchet that moves the RNA-DNA hybrid through the active site by switching from straight to bent conformations at each step of nucleotide addition. This is DNA-directed RNA polymerase I subunit rpa1 (rpa1) from Schizosaccharomyces pombe (strain 972 / ATCC 24843) (Fission yeast).